Reading from the N-terminus, the 997-residue chain is Bifunctional purine synthesis protein purC/E (997 aa).

The SAICAR synthetase stretch occupies residues 1–305 (MTTAINNNIV…NNNNNNNNNS (305 aa)). Composition is skewed to low complexity over residues 294–323 (LNNN…SLPN), 342–355 (QQQS…NVNS), and 524–536 (TSTS…TTTS). 4 disordered regions span residues 294 to 355 (LNNN…NVNS), 518 to 538 (IPVD…TSNA), 550 to 569 (INSN…QQQT), and 575 to 604 (PTII…SSII). The segment at 305–997 (SNNNNNNTSS…GRKMGHVTQQ (693 aa)) is AIR carboxylase. Low complexity predominate over residues 575–597 (PTIINTPTPVRSSVSRSQSPLPS). ATP-binding positions include Arg-728, Lys-768, Gln-779, 807-810 (EQYI), and Glu-815. Positions 732–927 (KTFIQSLDIP…QFEQLIRCVC (196 aa)) constitute an ATP-grasp domain. Residues Glu-880 and Glu-898 each coordinate Mg(2+). Position 897-898 (897-898 (NE)) interacts with ATP.

In the N-terminal section; belongs to the SAICAR synthetase family. The protein in the C-terminal section; belongs to the AIR carboxylase family. Class I subfamily. Requires Mg(2+) as cofactor. The cofactor is Mn(2+).

The catalysed reaction is 5-amino-1-(5-phospho-D-ribosyl)imidazole-4-carboxylate + L-aspartate + ATP = (2S)-2-[5-amino-1-(5-phospho-beta-D-ribosyl)imidazole-4-carboxamido]succinate + ADP + phosphate + 2 H(+). It catalyses the reaction 5-amino-1-(5-phospho-D-ribosyl)imidazole-4-carboxylate + H(+) = 5-amino-1-(5-phospho-beta-D-ribosyl)imidazole + CO2. It participates in purine metabolism; IMP biosynthesis via de novo pathway; 5-amino-1-(5-phospho-D-ribosyl)imidazole-4-carboxylate from 5-amino-1-(5-phospho-D-ribosyl)imidazole (carboxylase route): step 1/1. It functions in the pathway purine metabolism; IMP biosynthesis via de novo pathway; 5-amino-1-(5-phospho-D-ribosyl)imidazole-4-carboxamide from 5-amino-1-(5-phospho-D-ribosyl)imidazole-4-carboxylate: step 1/2. In terms of biological role, bifunctional enzyme involved in de novo IMP synthesis, an essential step for de nove purine synthesis. The protein is Bifunctional purine synthesis protein purC/E (purC/E) of Dictyostelium discoideum (Social amoeba).